Reading from the N-terminus, the 173-residue chain is 6,7-dimethyl-8-ribityllumazine synthase (173 aa).

5-amino-6-(D-ribitylamino)uracil is bound by residues Y34, A65–E67, and C94–I96. E99–T100 serves as a coordination point for (2S)-2-hydroxy-3-oxobutyl phosphate. H102 serves as the catalytic Proton donor. N127 serves as a coordination point for 5-amino-6-(D-ribitylamino)uracil. Residue R141 coordinates (2S)-2-hydroxy-3-oxobutyl phosphate.

It belongs to the DMRL synthase family.

It catalyses the reaction (2S)-2-hydroxy-3-oxobutyl phosphate + 5-amino-6-(D-ribitylamino)uracil = 6,7-dimethyl-8-(1-D-ribityl)lumazine + phosphate + 2 H2O + H(+). Its pathway is cofactor biosynthesis; riboflavin biosynthesis; riboflavin from 2-hydroxy-3-oxobutyl phosphate and 5-amino-6-(D-ribitylamino)uracil: step 1/2. Catalyzes the formation of 6,7-dimethyl-8-ribityllumazine by condensation of 5-amino-6-(D-ribitylamino)uracil with 3,4-dihydroxy-2-butanone 4-phosphate. This is the penultimate step in the biosynthesis of riboflavin. In Methylorubrum extorquens (strain CM4 / NCIMB 13688) (Methylobacterium extorquens), this protein is 6,7-dimethyl-8-ribityllumazine synthase.